Consider the following 495-residue polypeptide: Alpha-1B-glycoprotein (495 aa).

Residues 1–21 form the signal peptide; it reads MSMLVVFLLLWGVTWGPVTEA. Ig-like V-type domains follow at residues 22–113, 114–206, 207–299, 300–397, and 398–495; these read AIFY…LTGP, KSLP…ELAA, PPPP…PVEL, ILSD…LHVD, and GPPP…VAES. Asn44 carries an N-linked (GlcNAc...) (complex) asparagine glycan. 5 disulfide bridges follow: Cys49–Cys93, Cys139–Cys182, Cys232–Cys279, Cys325–Cys374, and Cys423–Cys470. N-linked (GlcNAc...) asparagine glycosylation is present at Asn179. Residues Asn363 and Asn371 are each glycosylated (N-linked (GlcNAc...) asparagine).

In terms of assembly, interacts with CRISP3. Plasma.

It localises to the secreted. This is Alpha-1B-glycoprotein (A1BG) from Homo sapiens (Human).